A 590-amino-acid chain; its full sequence is Glutamine--fructose-6-phosphate aminotransferase [isomerizing] (590 aa).

Cys-2 serves as the catalytic Nucleophile; for GATase activity. One can recognise a Glutamine amidotransferase type-2 domain in the interval 2 to 219 (CGIVACILKD…DGEMVILDGD (218 aa)). SIS domains follow at residues 277-415 (VVEE…PELM) and 438-580 (LAAT…PDKP). Catalysis depends on Lys-585, which acts as the For Fru-6P isomerization activity.

Homodimer.

The protein localises to the cytoplasm. The catalysed reaction is D-fructose 6-phosphate + L-glutamine = D-glucosamine 6-phosphate + L-glutamate. Catalyzes the first step in hexosamine metabolism, converting fructose-6P into glucosamine-6P using glutamine as a nitrogen source. This Methanothermobacter thermautotrophicus (strain ATCC 29096 / DSM 1053 / JCM 10044 / NBRC 100330 / Delta H) (Methanobacterium thermoautotrophicum) protein is Glutamine--fructose-6-phosphate aminotransferase [isomerizing].